The sequence spans 101 residues: MKDKGKLVIWPAYIDQTKSRSSGRIISRKNSIKEPHLNEIKEAARQLGLNPEVEPEKAYPKSWWEVSGRVLVDDNGPKSVIAKQIALAIKKMRGQEVPAKT.

It belongs to the SRP19 family. Part of the signal recognition particle protein translocation system, which is composed of SRP and FtsY. Archaeal SRP consists of a 7S RNA molecule of 300 nucleotides and two protein subunits: SRP54 and SRP19.

It localises to the cytoplasm. Its function is as follows. Involved in targeting and insertion of nascent membrane proteins into the cytoplasmic membrane. Binds directly to 7S RNA and mediates binding of the 54 kDa subunit of the SRP. The chain is Signal recognition particle 19 kDa protein from Methanosarcina mazei (strain ATCC BAA-159 / DSM 3647 / Goe1 / Go1 / JCM 11833 / OCM 88) (Methanosarcina frisia).